Here is a 337-residue protein sequence, read N- to C-terminus: Putative 4-hydroxythreonine-4-phosphate dehydrogenase (337 aa).

3 residues coordinate a divalent metal cation: His-172, His-216, and His-271.

It belongs to the PdxA family. In terms of assembly, homodimer. Zn(2+) serves as cofactor. Requires Mg(2+) as cofactor. It depends on Co(2+) as a cofactor.

It is found in the cytoplasm. It carries out the reaction 4-(phosphooxy)-L-threonine + NAD(+) = 3-amino-2-oxopropyl phosphate + CO2 + NADH. The protein operates within cofactor biosynthesis; pyridoxine 5'-phosphate biosynthesis; pyridoxine 5'-phosphate from D-erythrose 4-phosphate: step 4/5. Its function is as follows. Catalyzes the NAD(P)-dependent oxidation of 4-(phosphooxy)-L-threonine (HTP) into 2-amino-3-oxo-4-(phosphooxy)butyric acid which spontaneously decarboxylates to form 3-amino-2-oxopropyl phosphate (AHAP). In Pasteurella multocida (strain Pm70), this protein is Putative 4-hydroxythreonine-4-phosphate dehydrogenase.